Here is a 369-residue protein sequence, read N- to C-terminus: GTPase Obg (369 aa).

Residues 1–158 (MFTDVVELTV…RRIKLDLKLI (158 aa)) enclose the Obg domain. Residues 126-146 (NTHFKSSTNQRPTYAQPGEKG) form a disordered region. Residues 128–138 (HFKSSTNQRPT) show a composition bias toward polar residues. One can recognise an OBG-type G domain in the interval 159-362 (ADVGLVGFPN…LKHALFNLVQ (204 aa)). GTP-binding positions include 165–172 (GFPNVGKS), 190–194 (FTTLT), 212–215 (DIPG), 280–283 (TRAD), and 343–345 (SSA). Positions 172 and 192 each coordinate Mg(2+).

Belongs to the TRAFAC class OBG-HflX-like GTPase superfamily. OBG GTPase family. As to quaternary structure, monomer. Mg(2+) serves as cofactor.

The protein localises to the cytoplasm. Functionally, an essential GTPase which binds GTP, GDP and possibly (p)ppGpp with moderate affinity, with high nucleotide exchange rates and a fairly low GTP hydrolysis rate. Plays a role in control of the cell cycle, stress response, ribosome biogenesis and in those bacteria that undergo differentiation, in morphogenesis control. The sequence is that of GTPase Obg from Sulfurimonas denitrificans (strain ATCC 33889 / DSM 1251) (Thiomicrospira denitrificans (strain ATCC 33889 / DSM 1251)).